The sequence spans 316 residues: tRNA dimethylallyltransferase (316 aa).

17 to 24 serves as a coordination point for ATP; sequence GPTASGKT. 19 to 24 contacts substrate; that stretch reads TASGKT. 4 interaction with substrate tRNA regions span residues 42–45, 166–170, 247–252, and 280–287; these read DSAL, QRLSR, RCVGYR, and KRQITWLR.

This sequence belongs to the IPP transferase family. Monomer. Mg(2+) serves as cofactor.

It catalyses the reaction adenosine(37) in tRNA + dimethylallyl diphosphate = N(6)-dimethylallyladenosine(37) in tRNA + diphosphate. In terms of biological role, catalyzes the transfer of a dimethylallyl group onto the adenine at position 37 in tRNAs that read codons beginning with uridine, leading to the formation of N6-(dimethylallyl)adenosine (i(6)A). This Escherichia coli O157:H7 protein is tRNA dimethylallyltransferase.